A 359-amino-acid chain; its full sequence is Diacyltrehalose acyltransferase Chp2 (359 aa).

A helical transmembrane segment spans residues 4 to 24; the sequence is VIAGAFAVWLVGWAGGFGTAI. In terms of domain architecture, PE-PPE spans 79 to 316; sequence PNAKHDLIDY…VLQPQIDAAY (238 aa).

This sequence belongs to the mycobacterial PPE family.

It is found in the cell inner membrane. Activity is probably potentiated by the DAT/PAT transporter MmpL10. Inhibited by the lipase inhibitor tetrahydrolipstatin (THL). Functionally, involved in the final steps of polyacyltrehalose (PAT) biosynthesis. Catalyzes the transfer of three mycolipenoyl groups onto diacyltrehalose (DAT) to form PAT. This Mycobacterium tuberculosis (strain ATCC 25618 / H37Rv) protein is Diacyltrehalose acyltransferase Chp2.